A 97-amino-acid chain; its full sequence is UPF0235 protein APL_1380 (97 aa).

This sequence belongs to the UPF0235 family.

This Actinobacillus pleuropneumoniae serotype 5b (strain L20) protein is UPF0235 protein APL_1380.